The chain runs to 443 residues: Phosphoglucosamine mutase (443 aa).

The active-site Phosphoserine intermediate is Ser101. Mg(2+) is bound by residues Ser101, Asp239, Asp241, and Asp243. Ser101 is subject to Phosphoserine.

It belongs to the phosphohexose mutase family. The cofactor is Mg(2+). In terms of processing, activated by phosphorylation.

It catalyses the reaction alpha-D-glucosamine 1-phosphate = D-glucosamine 6-phosphate. Functionally, catalyzes the conversion of glucosamine-6-phosphate to glucosamine-1-phosphate. The sequence is that of Phosphoglucosamine mutase from Francisella tularensis subsp. novicida (strain U112).